The sequence spans 883 residues: Phosphoenolpyruvate carboxylase (883 aa).

Active-site residues include histidine 138 and lysine 546.

Belongs to the PEPCase type 1 family. Requires Mg(2+) as cofactor.

It carries out the reaction oxaloacetate + phosphate = phosphoenolpyruvate + hydrogencarbonate. Forms oxaloacetate, a four-carbon dicarboxylic acid source for the tricarboxylic acid cycle. The sequence is that of Phosphoenolpyruvate carboxylase from Erwinia tasmaniensis (strain DSM 17950 / CFBP 7177 / CIP 109463 / NCPPB 4357 / Et1/99).